Here is a 141-residue protein sequence, read N- to C-terminus: Large ribosomal subunit protein uL11 (141 aa).

It belongs to the universal ribosomal protein uL11 family. Part of the ribosomal stalk of the 50S ribosomal subunit. Interacts with L10 and the large rRNA to form the base of the stalk. L10 forms an elongated spine to which L12 dimers bind in a sequential fashion forming a multimeric L10(L12)X complex. Post-translationally, one or more lysine residues are methylated.

In terms of biological role, forms part of the ribosomal stalk which helps the ribosome interact with GTP-bound translation factors. This is Large ribosomal subunit protein uL11 from Opitutus terrae (strain DSM 11246 / JCM 15787 / PB90-1).